We begin with the raw amino-acid sequence, 470 residues long: MDRGEKIQLKRVFGYWWGTSFLLINIIGAGIFVSPKGVLAYSCMNVGVSLCVWAGCAILAMTSTLCSAEISISFPCSGAQYYFLKRYFGSTVAFLNLWTSLFLGSGVVAGQALLLAEYSIQPFFPSCSVPKLPKKCLALAMLWIVGILTSRGVKEVTWLQIASSVLKVSILSFISLTGVVFLIRGKKENVERFQNAFDAELPDISHLIQAIFQGYFAYSGGACFTLIAGELKKPRTTIPKCIFTALPLVTVVYLLVNISYLTVLTPREILSSDAVAITWADRAFPSLAWIMPFAISTSLFSNLLISIFKSSRPIYLASQEGQLPLLFNTLNSHSSPFTAVLLLVTLGSLAIILTSLIDLINYIFFTGSLWSILLMIGILRRRYQEPNLSIPYKVFLSFPLATIVIDVGLVVIPLVKSPNVHYVYVLLLVLSGLLFYIPLIHFKIRLAWFEKMTCYLQLLFNICLPDVSEE.

Over 1–11 (MDRGEKIQLKR) the chain is Cytoplasmic. A helical membrane pass occupies residues 12–32 (VFGYWWGTSFLLINIIGAGIF). Residues 33 to 45 (VSPKGVLAYSCMN) are Extracellular-facing. Residues 46 to 66 (VGVSLCVWAGCAILAMTSTLC) traverse the membrane as a helical segment. At 67 to 87 (SAEISISFPCSGAQYYFLKRY) the chain is on the cytoplasmic side. The helical transmembrane segment at 88–108 (FGSTVAFLNLWTSLFLGSGVV) threads the bilayer. Over 109–128 (AGQALLLAEYSIQPFFPSCS) the chain is Extracellular. Residues 129–149 (VPKLPKKCLALAMLWIVGILT) form a helical membrane-spanning segment. Residues 150 to 162 (SRGVKEVTWLQIA) are Cytoplasmic-facing. A helical membrane pass occupies residues 163–183 (SSVLKVSILSFISLTGVVFLI). Residues 184–206 (RGKKENVERFQNAFDAELPDISH) lie on the Extracellular side of the membrane. A helical transmembrane segment spans residues 207-227 (LIQAIFQGYFAYSGGACFTLI). Topologically, residues 228–240 (AGELKKPRTTIPK) are cytoplasmic. A helical transmembrane segment spans residues 241 to 261 (CIFTALPLVTVVYLLVNISYL). Topologically, residues 262 to 287 (TVLTPREILSSDAVAITWADRAFPSL) are extracellular. The chain crosses the membrane as a helical span at residues 288-308 (AWIMPFAISTSLFSNLLISIF). The Cytoplasmic portion of the chain corresponds to 309 to 336 (KSSRPIYLASQEGQLPLLFNTLNSHSSP). The chain crosses the membrane as a helical span at residues 337–357 (FTAVLLLVTLGSLAIILTSLI). Asp-358 is a topological domain (extracellular). A helical transmembrane segment spans residues 359 to 379 (LINYIFFTGSLWSILLMIGIL). The Cytoplasmic portion of the chain corresponds to 380 to 393 (RRRYQEPNLSIPYK). The helical transmembrane segment at 394-414 (VFLSFPLATIVIDVGLVVIPL) threads the bilayer. Residues 415 to 421 (VKSPNVH) are Extracellular-facing. Residues 422 to 442 (YVYVLLLVLSGLLFYIPLIHF) traverse the membrane as a helical segment. Residues 443-470 (KIRLAWFEKMTCYLQLLFNICLPDVSEE) lie on the Cytoplasmic side of the membrane.

It belongs to the amino acid-polyamine-organocation (APC) superfamily. In terms of assembly, disulfide-linked heterodimer composed of the catalytic light subunit SLC7A13 and the heavy subunit SLC3A1. Expressed in the kidney.

It localises to the apical cell membrane. The catalysed reaction is L-cystine(out) + L-aspartate(in) = L-cystine(in) + L-aspartate(out). It catalyses the reaction L-cystine(out) = L-cystine(in). It carries out the reaction L-aspartate(in) + L-glutamate(out) = L-aspartate(out) + L-glutamate(in). The enzyme catalyses L-aspartate(in) + L-glutamine(out) = L-aspartate(out) + L-glutamine(in). The catalysed reaction is L-aspartate(in) + L-methionine(out) = L-aspartate(out) + L-methionine(in). It catalyses the reaction L-leucine(out) + L-aspartate(in) = L-leucine(in) + L-aspartate(out). It carries out the reaction L-valine(out) + L-aspartate(in) = L-valine(in) + L-aspartate(out). The enzyme catalyses L-aspartate(in) + L-phenylalanine(out) = L-aspartate(out) + L-phenylalanine(in). The catalysed reaction is L-tyrosine(out) + L-aspartate(in) = L-tyrosine(in) + L-aspartate(out). It catalyses the reaction L-tryptophan(out) + L-aspartate(in) = L-tryptophan(in) + L-aspartate(out). Its function is as follows. Associates with SLC3A1/rBAT to form a functional heterodimeric complex that transports anionic and neutral amino acids across the apical plasma membrane of renal epithelium. Preferentially mediates exchange transport, but can also operate via facilitated diffusion. May act as a major transporter for L-cystine in late proximal tubules, ensuring its reabsorption from the luminal fluid in exchange for cytosolic L-glutamate or L-aspartate. This is Solute carrier family 7 member 13 (SLC7A13) from Homo sapiens (Human).